The primary structure comprises 114 residues: Neurotrophic factor BDNF precursor form (114 aa).

Disulfide bonds link cysteine 14/cysteine 81, cysteine 59/cysteine 110, and cysteine 69/cysteine 112.

The protein belongs to the NGF-beta family.

It localises to the secreted. In terms of biological role, promotes the survival of neuronal populations that are all located either in the central nervous system or directly connected to it. The protein is Neurotrophic factor BDNF precursor form (bdnf) of Xenopus laevis (African clawed frog).